A 62-amino-acid polypeptide reads, in one-letter code: uncharacterized protein (62 aa).

The chain crosses the membrane as a helical span at residues 17–37 (IVFFLGLVVVLLMMINLYMLI).

It localises to the membrane. This is an uncharacterized protein from Helicobacter pylori (strain J99 / ATCC 700824) (Campylobacter pylori J99).